A 176-amino-acid chain; its full sequence is MAAAGRGREQDSARFVYVTRFGSHQCSGVLQLGGRGAQGLWGQGPGAGCRQEKPREAMAVAGVQGGSELPLGSQLRVPTTPGVEAAASASSQLRASRVQSGTRQSARAGLIQKDAAKKYDFPIPLNEASKIMKKKKKVLVWNRVYKVISRMLEENEKYRHRLKCQRLSSESSNYTR.

Residues 87-100 show a composition bias toward low complexity; it reads ASASSQLRASRVQS. Residues 87-109 are disordered; sequence ASASSQLRASRVQSGTRQSARAG.

This is an uncharacterized protein from Homo sapiens (Human).